A 538-amino-acid polypeptide reads, in one-letter code: Calcium-dependent protein kinase 3 (538 aa).

Residues 23–70 (PKKSIERIKKKKDSNKSIKSQHKFEGSKISNKNNELKDVKSKDPKNYE) are disordered. Over residues 56–68 (NELKDVKSKDPKN) the composition is skewed to basic and acidic residues. A Protein kinase domain is found at 112 to 367 (NLSEEPLGKG…ASEALKHPWF (256 aa)). Residues 118–126 (LGKGTYGCV) and lysine 141 each bind ATP. The active-site Proton acceptor is the aspartate 232. Residues 387–395 (NFKNYALLL) carry the J domain autoinhibitory motif motif. The j domain stretch occupies residues 387–422 (NFKNYALLLKLQKLAMTIIAQQSNDYDLQQLKAVFL). Positions 396 to 405 (KLQKLAMTII) match the J domain EF-hand interaction motif motif. 3 EF-hand domains span residues 412-447 (YDLQ…SGLK), 450-481 (QNFD…DRKH), and 482-517 (LSKK…VILF). Residues aspartate 460, aspartate 462, serine 464, arginine 466, glutamate 471, aspartate 495, aspartate 497, aspartate 499, glutamate 501, and glutamate 506 each coordinate Ca(2+).

It belongs to the protein kinase superfamily. Ser/Thr protein kinase family. CDPK subfamily. Mg(2+) is required as a cofactor.

The protein resides in the cytoplasm. It catalyses the reaction L-seryl-[protein] + ATP = O-phospho-L-seryl-[protein] + ADP + H(+). The catalysed reaction is L-threonyl-[protein] + ATP = O-phospho-L-threonyl-[protein] + ADP + H(+). Activated by calcium. Upon calcium binding to the EF-hand domain 2, the C-terminus of the junction domain (J domain) undergoes a conformational change which results in the dissociation of the pseudo-substrate inhibitory motif from the catalytic domain. This, in turn, may facilitate the autophosphorylation of the activation loop at Thr-273, which leads to the kinase activation. Functionally, calcium-dependent protein kinase which acts as a sensor and effector of intracellular Ca(2+) levels probably in part downstream of cGMP-activated PKG kinase. In the mosquito midgut, regulates the gliding motility of the ookinete which is essential for the ookinete to invade the midgut epithelium. However, another study showed that while required for ookinete invasion of the midgut epithelium, is not required for ookinete gliding motility. This Plasmodium yoelii yoelii protein is Calcium-dependent protein kinase 3.